The sequence spans 441 residues: MTTVTRFAPSPTGFIHVGNLRTALMNWAIARKSGGTFILRLDDTDRERSKQEYSDAIMQDLEWLGLTWDRLERQSDRLDRYAEAAGDLRRAGRFYECFESPTELDLKRKKLLNMGKPPVYDRAALKLSDEDRARLREERGGYWRFLLDQERIEWTDGILGPISIDAASVSDPVLIRADGQVLYTFASSVDDIDMGVTFIVRGADHVTNTATQIQIMQAMGGTPPSFAHHSLLTGAQGEALSKRLGTLSLRDLRARGVEPMALLSLMARLGSSQPVELFRTHEELLAGFDVGTFGAAPTKFDAEDLFPLTRHYVQGLPFEAVAERIRSLGVPDALAEPFWRVAKDNIAVLEDLGGWWTLFSEGAEPQIDPEDADFIRQAMALLPEPPYGPETWGQWTAAVKEATGRKGKGLFMPLRKALTGQAHGPEMADVMPLLQTVRAKG.

The short motif at 9 to 19 (PSPTGFIHVGN) is the 'HIGH' region element. Positions 239–243 (ALSKR) match the 'KMSKS' region motif. Lysine 242 is a binding site for ATP.

The protein belongs to the class-I aminoacyl-tRNA synthetase family. Glutamate--tRNA ligase type 1 subfamily. Monomer.

It is found in the cytoplasm. It carries out the reaction tRNA(Glu) + L-glutamate + ATP = L-glutamyl-tRNA(Glu) + AMP + diphosphate. In terms of biological role, catalyzes the attachment of glutamate to tRNA(Glu) in a two-step reaction: glutamate is first activated by ATP to form Glu-AMP and then transferred to the acceptor end of tRNA(Glu). In Cereibacter sphaeroides (strain ATCC 17025 / ATH 2.4.3) (Rhodobacter sphaeroides), this protein is Glutamate--tRNA ligase 1.